The primary structure comprises 588 residues: Hyaluronan synthase 1 (588 aa).

At 1 to 28 the chain is on the cytoplasmic side; that stretch reads MKEKAAETMEIPEGIPKDLEPKHPTLWR. A helical membrane pass occupies residues 29-49; that stretch reads IIYYSFGVVLLATITAAYVAE. The Extracellular portion of the chain corresponds to 50 to 61; that stretch reads FQVLKHEAILFS. The helical transmembrane segment at 62-82 threads the bilayer; the sequence is LGLYGLAMLLHLMMQSLFAFL. The Cytoplasmic segment spans residues 83 to 411; that stretch reads EIRRVNKSEL…IWMTYESVVS (329 aa). Residues 412 to 432 form a helical membrane-spanning segment; it reads FIFPFFITATVIRLIYAGTIW. A topological domain (extracellular) is located at residue Asn433. Residues 434-454 form a helical membrane-spanning segment; sequence VVWLLLCIQIMSLFKSIYACW. Residues 455-456 are Cytoplasmic-facing; sequence LR. The helical transmembrane segment at 457-477 threads the bilayer; it reads GNFIMLLMSLYSMLYMTGLLP. The Extracellular portion of the chain corresponds to 478–505; that stretch reads SKYFALLTLNKTGWGTSGRKKIVGNYMP. A helical membrane pass occupies residues 506–526; sequence ILPLSIWAAVLCGGVGYSIYM. Residues 527–543 are Cytoplasmic-facing; the sequence is DCQNDWSTPEKQKEMYH. The helical transmembrane segment at 544-564 threads the bilayer; that stretch reads LLYGCVGYVMYWVIMAVMYWV. Residues 565-588 lie on the Extracellular side of the membrane; the sequence is WVKRCCRKRSQTVTLVHDIPDMCV.

Belongs to the NodC/HAS family. The cofactor is Mg(2+). In terms of tissue distribution, expression moves as a gradient through the embryo. The mRNA is first expressed in the animal region of the blastula, and by early gastrula is found everywhere except in the outer layer of the dorsal blastopore lip. By mid-gastrula, protein is present in the inner ectodermal layer and the endoderm, then disappears from dorsal ectoderm as the neural plate is induced and later decays in a dorsoventral direction. Last expressed in ventral regions of the gut at the tailbud stage (at protein level).

The protein localises to the membrane. The catalysed reaction is [hyaluronan](n) + UDP-N-acetyl-alpha-D-glucosamine = N-acetyl-beta-D-glucosaminyl-(1-&gt;4)-[hyaluronan](n) + UDP + H(+). It catalyses the reaction N-acetyl-beta-D-glucosaminyl-(1-&gt;4)-[hyaluronan](n) + UDP-alpha-D-glucuronate = [hyaluronan](n+1) + UDP + H(+). The protein operates within glycan biosynthesis; hyaluronan biosynthesis. Functionally, catalyzes the addition of GlcNAc or GlcUA monosaccharides to the nascent hyaluronan polymer. Therefore, it is essential to hyaluronan synthesis a major component of most extracellular matrices that has a structural role in tissues architectures and regulates cell adhesion, migration and differentiation. Also able to catalyze the synthesis of chito-oligosaccharide depending on the substrate. The sequence is that of Hyaluronan synthase 1 (has1) from Xenopus laevis (African clawed frog).